A 199-amino-acid chain; its full sequence is Protein-methionine-sulfoxide reductase heme-binding subunit MsrQ (199 aa).

5 helical membrane passes run 10–30 (WLKV…ILSV), 79–99 (LLGL…SVLE), 118–138 (LTLG…STLW), 147–167 (WQKL…HYLW), and 169–189 (VKTL…LLAL).

The protein belongs to the MsrQ family. Heterodimer of a catalytic subunit (MsrP) and a heme-binding subunit (MsrQ). FMN is required as a cofactor. Requires heme b as cofactor.

The protein localises to the cell inner membrane. In terms of biological role, part of the MsrPQ system that repairs oxidized periplasmic proteins containing methionine sulfoxide residues (Met-O), using respiratory chain electrons. Thus protects these proteins from oxidative-stress damage caused by reactive species of oxygen and chlorine generated by the host defense mechanisms. MsrPQ is essential for the maintenance of envelope integrity under bleach stress, rescuing a wide series of structurally unrelated periplasmic proteins from methionine oxidation. MsrQ provides electrons for reduction to the reductase catalytic subunit MsrP, using the quinone pool of the respiratory chain. This is Protein-methionine-sulfoxide reductase heme-binding subunit MsrQ from Yersinia enterocolitica serotype O:8 / biotype 1B (strain NCTC 13174 / 8081).